The primary structure comprises 276 residues: Phosphonates import ATP-binding protein PhnC (276 aa).

An ABC transporter domain is found at 2–246 (LEIHNLQKSY…VLTRIYGAED (245 aa)). Position 35–42 (35–42 (GPSGAGKS)) interacts with ATP.

This sequence belongs to the ABC transporter superfamily. Phosphonates importer (TC 3.A.1.9.1) family. The complex is composed of two ATP-binding proteins (PhnC), two transmembrane proteins (PhnE) and a solute-binding protein (PhnD).

Its subcellular location is the cell inner membrane. It carries out the reaction phosphonate(out) + ATP + H2O = phosphonate(in) + ADP + phosphate + H(+). Functionally, part of the ABC transporter complex PhnCDE involved in phosphonates import. Responsible for energy coupling to the transport system. This Alcaligenes faecalis protein is Phosphonates import ATP-binding protein PhnC.